Reading from the N-terminus, the 562-residue chain is MDTVRWIISTAPEIFLLLAVAIGTMLGRLKIHGFAIGTTACILIVSVLIGQLGTFTFPALLRIVLFSLFVFTIGYKSGPEFFASLSVRTLAQVAMALVLGGTGLVIVLAFAFALKLDPGTASGLAAGALTQSSVIGTASGALAQLGLPKTVLEQQEANIAAGYAVTYVLGYILTLLYVPFAAPKLMGVNLKDEAKKLEVELSGGAPPKTENLSYRKFQARAYRVTAAAGRTVKAIEEDIGSRTVIERIVRQGADIEPRLDTVLEAGDDIVIAGRTAAIVAAKPIIGTEIDADEILKAIPGNVLDVLVDNRNLHGRSIRDVADRIGGDARGVFLRALTRHGREAPLSADTRVYVGDVMTLVGSTRNIERAAKQVGQIVRSGDRTDIAFLAAGIAAGLLAGLVSFKVGGIALTLGGGGGALIAGLLCGWLRSRRPTMGAMPPAAQQTLSDLGLGGFIAAIGLANGHAAWVAIQAHGLLLVGMGLVVTLVPLVVATLFAYHVLRMNPVITCGALAGAMTVDAAVTGACEIAESQTPVLGVAVPYAVGNVVLTVLGPIIVACTFVG.

Transmembrane regions (helical) follow at residues Val-4–Leu-26, Gly-33–Phe-55, Ala-59–Gly-78, Leu-90–Phe-112, and Ile-159–Ala-181. 2 consecutive RCK C-terminal domains span residues Pro-207 to Thr-287 and Leu-295 to Gln-375. 6 consecutive transmembrane segments (helical) span residues Ile-385–Ser-402, Gly-406–Leu-428, Leu-449–Gln-471, Leu-476–His-498, Val-505–Ala-524, and Val-539–Val-561.

This sequence belongs to the AAE transporter (TC 2.A.81) family.

It localises to the cell membrane. This is an uncharacterized protein from Bradyrhizobium diazoefficiens (strain JCM 10833 / BCRC 13528 / IAM 13628 / NBRC 14792 / USDA 110).